The following is a 429-amino-acid chain: MTDANHLLDPSGALPQTRPPWTSRDSLRITRVRAIVTAPEGQPLVVVRVDTSDDGLYGLGCATFTQRYAAVAAAVDEHVGPLAVGRHPADIEDITRLIHYSSYWRSGPVLNNALSGLDQALWDIAGKRAGMPVYELLGGRSRSAVEVYSHAAGGTIEATLDQAEELLAEGYRNVRLQLGGPGLGTYGAPGTLGGYPRSPHPDGWAVEQYLRDAPRLFAAARERLGDSVNLMHDVHSRLTPKQAVVLARALEPYRLSFLEDVIAPELYDRLPEVRAASPVPIAVGEQIGSVPDAVRLVRDGGVDLLRLHTSAVGGLTPTRKIVALCELLGVRTAFHSPADVSPVGVAANLAVDISTPAFGYQESHTYNDATHEVFPGTRVVREGHLYPAEEPGWGIEIDERAAAKFPPVKFLHERWSSGVRRPDGGLEAP.

A disordered region spans residues Met1–Thr22. A Mg(2+)-binding site is contributed by Asp233. D-arabinonate is bound at residue His235. Glu259 and Glu285 together coordinate Mg(2+). Residues Glu285, Arg306, His335, and Glu362 each contribute to the D-arabinonate site.

This sequence belongs to the mandelate racemase/muconate lactonizing enzyme family. GalD subfamily.

In terms of biological role, has no detectable activity with D-mannonate and with a panel of 70 other acid sugars (in vitro), in spite of the conservation of the residues that are expected to be important for catalytic activity and cofactor binding. May have evolved a divergent function. The protein is D-galactonate dehydratase family member Caci_4410 of Catenulispora acidiphila (strain DSM 44928 / JCM 14897 / NBRC 102108 / NRRL B-24433 / ID139908).